The chain runs to 392 residues: 8-amino-7-oxononanoate synthase (392 aa).

Arginine 26 contributes to the substrate binding site. Residue 112-113 participates in pyridoxal 5'-phosphate binding; it reads GF. Histidine 137 provides a ligand contact to substrate. Pyridoxal 5'-phosphate is bound by residues serine 187, histidine 215, and threonine 241. Lysine 244 carries the post-translational modification N6-(pyridoxal phosphate)lysine. A substrate-binding site is contributed by threonine 357.

This sequence belongs to the class-II pyridoxal-phosphate-dependent aminotransferase family. BioF subfamily. In terms of assembly, homodimer. The cofactor is pyridoxal 5'-phosphate.

The catalysed reaction is 6-carboxyhexanoyl-[ACP] + L-alanine + H(+) = (8S)-8-amino-7-oxononanoate + holo-[ACP] + CO2. It participates in cofactor biosynthesis; biotin biosynthesis. In terms of biological role, catalyzes the decarboxylative condensation of pimeloyl-[acyl-carrier protein] and L-alanine to produce 8-amino-7-oxononanoate (AON), [acyl-carrier protein], and carbon dioxide. This is 8-amino-7-oxononanoate synthase from Photobacterium profundum (strain SS9).